Reading from the N-terminus, the 161-residue chain is Regulator of ribonuclease activity A (161 aa).

The protein belongs to the RraA family. Homotrimer. Binds to both RNA-binding sites in the C-terminal region of Rne and to RhlB.

It is found in the cytoplasm. In terms of biological role, globally modulates RNA abundance by binding to RNase E (Rne) and regulating its endonucleolytic activity. Can modulate Rne action in a substrate-dependent manner by altering the composition of the degradosome. Modulates RNA-binding and helicase activities of the degradosome. This is Regulator of ribonuclease activity A from Shewanella sediminis (strain HAW-EB3).